Here is a 233-residue protein sequence, read N- to C-terminus: Protein TIPIN homolog (233 aa).

Residues 1 to 14 show a composition bias toward acidic residues; it reads MDEMEDFFENDELD. 2 disordered regions span residues 1–39 and 134–233; these read MDEM…RVVE and GETG…NNDW. Composition is skewed to basic and acidic residues over residues 163 to 190 and 197 to 216; these read DLFK…KTAE and EEYR…AKEA. Positions 217–227 are enriched in acidic residues; sequence ADEDALMEDFG.

The protein belongs to the CSM3 family.

Its subcellular location is the cytoplasm. The protein localises to the nucleus. In terms of biological role, required for normal progression of S-phase. Important for cell survival after DNA damage or replication stress. The protein is Protein TIPIN homolog of Caenorhabditis elegans.